The sequence spans 563 residues: MAEKFKVESPHVRYLKDVIEADYNYDTTQVYEEKGVTKVKPCSTKFTFHTERKVPKLGVMLVGWGGNNGTTVTAAVLANRLGLSWMTKTGKKVANYYGSLFQSSTACLGSGPAGDVFVPFRDLLPMVHPNDIVFDGWDISSLNLADAMFRAEVLDWQIQEQLRPYMEKMKPRPSIYIPDFIAANQEDRADHTIHGTKAEQVQKIREDIQDFKRTSDVDKVIVLWTANTERFCDIIPGVNDTADNLLKAIENGLEVSPSTMFAVASILEGCAYINGSPQNTFVPGAIELAVQNNVFIGGDDFKSGQTKIKSVLMDFLVSAGLKPVSIVSYNHLGNNDGKNLSAPQQFRSKEISKSNVVDDMVQSNPILYGPNEKPDHCVVIKYVPYVGDSKRAMDEYTSEIMMGGANTIVLHNTCEDSLLASPIILDLVLLTELCQRITFRTETDQEFQTFHSVLSILSFLCKAPLVPAGTPVINAFFRQRNCIENILRACLGLSPQNHMMLEHKMQRSFVSLKRPSTVCNPQPISSKKGNNANGFHLPGISKGLSQSNGLGKNVINSDIEIEN.

This sequence belongs to the myo-inositol 1-phosphate synthase family. NAD(+) serves as cofactor.

It is found in the cytoplasm. The catalysed reaction is D-glucose 6-phosphate = 1D-myo-inositol 3-phosphate. Its pathway is polyol metabolism; myo-inositol biosynthesis; myo-inositol from D-glucose 6-phosphate: step 1/2. In terms of biological role, key enzyme in myo-inositol biosynthesis pathway that catalyzes the conversion of glucose 6-phosphate to 1-myo-inositol 1-phosphate in a NAD-dependent manner. Rate-limiting enzyme in the synthesis of all inositol-containing compounds. This chain is Inositol-3-phosphate synthase 1-A (isyna1-a), found in Xenopus laevis (African clawed frog).